The chain runs to 380 residues: Cytochrome b (380 aa).

4 consecutive transmembrane segments (helical) span residues Tyr-34–Met-54, Trp-78–Ile-99, Trp-114–Leu-134, and Phe-179–Leu-199. Heme b-binding residues include His-84 and His-98. Positions 183 and 197 each coordinate heme b. His-202 lines the a ubiquinone pocket. The next 4 membrane-spanning stretches (helical) occupy residues Tyr-227 to Asn-247, Leu-289 to His-309, Leu-321 to Gly-341, and Phe-348 to Pro-368.

It belongs to the cytochrome b family. As to quaternary structure, the cytochrome bc1 complex contains 3 respiratory subunits (MT-CYB, CYC1 and UQCRFS1), 2 core proteins (UQCRC1 and UQCRC2) and probably 6 low-molecular weight proteins. Heme b is required as a cofactor.

Its subcellular location is the mitochondrion inner membrane. Its function is as follows. Component of the ubiquinol-cytochrome c reductase complex (complex III or cytochrome b-c1 complex) that is part of the mitochondrial respiratory chain. The b-c1 complex mediates electron transfer from ubiquinol to cytochrome c. Contributes to the generation of a proton gradient across the mitochondrial membrane that is then used for ATP synthesis. This chain is Cytochrome b (mt-cyb), found in Typhlonectes natans (Rubber eel).